A 395-amino-acid chain; its full sequence is uncharacterized protein (395 aa).

This is an uncharacterized protein from Methanocaldococcus jannaschii (strain ATCC 43067 / DSM 2661 / JAL-1 / JCM 10045 / NBRC 100440) (Methanococcus jannaschii).